Reading from the N-terminus, the 432-residue chain is Adenylosuccinate synthetase (432 aa).

Residues 12-18 and 40-42 contribute to the GTP site; these read GDEGKGK and GHT. The active-site Proton acceptor is Asp13. Residues Asp13 and Gly40 each coordinate Mg(2+). Residues 13–16, 38–41, Thr132, Arg146, Gln226, Thr241, and Arg305 each bind IMP; these read DEGK and NAGH. His41 (proton donor) is an active-site residue. A substrate-binding site is contributed by 301–307; that stretch reads TVTGRKR. Residues Arg307, 333–335, and 415–417 contribute to the GTP site; these read KLD and STS.

This sequence belongs to the adenylosuccinate synthetase family. In terms of assembly, homodimer. Mg(2+) serves as cofactor.

The protein resides in the cytoplasm. It catalyses the reaction IMP + L-aspartate + GTP = N(6)-(1,2-dicarboxyethyl)-AMP + GDP + phosphate + 2 H(+). It participates in purine metabolism; AMP biosynthesis via de novo pathway; AMP from IMP: step 1/2. In terms of biological role, plays an important role in the de novo pathway of purine nucleotide biosynthesis. Catalyzes the first committed step in the biosynthesis of AMP from IMP. The sequence is that of Adenylosuccinate synthetase from Sinorhizobium medicae (strain WSM419) (Ensifer medicae).